Consider the following 447-residue polypeptide: Glycylpeptide N-tetradecanoyltransferase (447 aa).

Residues 38-41, 171-173, and 179-183 contribute to the tetradecanoyl-CoA site; these read YKFW, LCV, and SKRLA. Leu-447 acts as the Proton acceptor; via carboxylate in catalysis.

It belongs to the NMT family. In terms of assembly, monomer.

The protein localises to the cytoplasm. It carries out the reaction N-terminal glycyl-[protein] + tetradecanoyl-CoA = N-tetradecanoylglycyl-[protein] + CoA + H(+). Its function is as follows. Adds a myristoyl group to the N-terminal glycine residue of certain cellular proteins. This is Glycylpeptide N-tetradecanoyltransferase (NMT1) from Kluyveromyces lactis (strain ATCC 8585 / CBS 2359 / DSM 70799 / NBRC 1267 / NRRL Y-1140 / WM37) (Yeast).